We begin with the raw amino-acid sequence, 125 residues long: Inner membrane protein YbaN (125 aa).

Residues 1 to 6 (MQRIIL) are Cytoplasmic-facing. Residues 7 to 26 (IIIGWLAVVLGTLGVVLPVL) traverse the membrane as a helical segment. The Periplasmic segment spans residues 27–45 (PTTPFILLAAWCFARSSPR). A helical transmembrane segment spans residues 46 to 63 (FHAWLLYRSWFGSYLRFW). At 64 to 74 (QKHHAMPRGVK) the chain is on the cytoplasmic side. The helical transmembrane segment at 75–92 (PRAILLILLTFAISLWFV) threads the bilayer. The Periplasmic portion of the chain corresponds to 93–95 (QMP). Residues 96 to 118 (WVRIMLLVILACLLFYMWRIPVI) traverse the membrane as a helical segment. The Cytoplasmic segment spans residues 119–125 (DEKQEKH).

The protein resides in the cell inner membrane. The sequence is that of Inner membrane protein YbaN (ybaN) from Escherichia coli O157:H7.